Consider the following 1265-residue polypeptide: Kinesin-like protein Klp98A (1265 aa).

Positions 3 to 364 (SLKVAVRVRP…LRYANRAKNI (362 aa)) constitute a Kinesin motor domain. 100-107 (GQTGSGKT) lines the ATP pocket. Disordered stretches follow at residues 597–621 (GASPYKRPERQYYPQRPMSRDDPEL), 828–864 (EAESQAMRAKKQNMKLQLGNKSMSTSTSTNEADDVSK), and 884–954 (VSSP…CTPS). 2 coiled-coil regions span residues 619–670 (PELQ…EEMD) and 768–848 (AQFI…LGNK). Composition is skewed to polar residues over residues 846 to 857 (GNKSMSTSTSTN), 884 to 901 (VSSPTITEGQQSPLSNCS), and 917 to 927 (SGSSEETSRTC). The span at 933-946 (SGSGSGSVGIGGSG) shows a compositional bias: gly residues. Residues 1035 to 1071 (DLNKAQLDEHIADLQDLQRRYIQMEQEMLQSVQDLEA) are a coiled coil. Positions 1129-1259 (GEHFITIPSF…SFFKKGLFEN (131 aa)) constitute a PX domain.

The protein belongs to the TRAFAC class myosin-kinesin ATPase superfamily. Kinesin family. Interacts with Atg8a and Rab14.

It is found in the early endosome. Plus end-directed motor protein involved in asymmetric cell division of sensory organ precursor (SOP) cells by playing a role in the asymmetric localization of Sara-expressing endosomes to the pIIa daughter cell but not to the pIIb cell. Targets Sara-expressing endosomes to the central spindle which is symmetrically arranged in early cell division. During late cytokinesis, central spindle asymmetry is generated by enrichment of Patronin on the pIIb side which protects microtubules from depolymerization by Klp10A while unprotected microtubules on the pIIa side are disassembled by Klp10A, leading to the asymmetric delivery of Sara-expressing endosomes to the pIIa daughter cell. Also plays a role in regulation of autophagosome formation, fusion and positioning and is required for normal localization of Rab14. The polypeptide is Kinesin-like protein Klp98A (Drosophila melanogaster (Fruit fly)).